The sequence spans 969 residues: Translation initiation factor IF-2 (969 aa).

The segment at 50 to 370 is disordered; that stretch reads SFASKSAPAN…QAPSVGGVRL (321 aa). The segment covering 54 to 76 has biased composition (low complexity); that stretch reads KSAPANGAKPGPAASARPGAKPT. A compositionally biased stretch (pro residues) spans 77–87; the sequence is PGGPRPGPRTP. A compositionally biased stretch (low complexity) spans 88–102; that stretch reads APAASAPQAPAEQTA. Pro residues predominate over residues 112-124; sequence AVKPGPAPTPARP. The segment covering 125–164 has biased composition (low complexity); that stretch reads AAPEAPAAKAAPEAPAQRPTPGGPRPGQQQQRPGAPAQGG. Positions 240 to 267 are enriched in pro residues; that stretch reads PGGPRPSPGSMPPRPNPGAMPQRTPRPG. Residues 269 to 340 are compositionally biased toward gly residues; it reads SAGGRPGRPG…GAAGAFGRPG (72 aa). Basic residues predominate over residues 344-353; the sequence is RRGRKSKRQK. A tr-type G domain is found at 465–636; that stretch reads VRPPVVTVMG…AVLLTADAAL (172 aa). Positions 474 to 481 are G1; that stretch reads GHVDHGKT. 474–481 serves as a coordination point for GTP; it reads GHVDHGKT. A G2 region spans residues 499 to 503; it reads GITQH. The tract at residues 524-527 is G3; it reads DTPG. GTP contacts are provided by residues 524-528 and 578-581; these read DTPGH and NKID. Residues 578 to 581 form a G4 region; it reads NKID. Residues 614-616 are G5; that stretch reads SAK.

It belongs to the TRAFAC class translation factor GTPase superfamily. Classic translation factor GTPase family. IF-2 subfamily.

It localises to the cytoplasm. In terms of biological role, one of the essential components for the initiation of protein synthesis. Protects formylmethionyl-tRNA from spontaneous hydrolysis and promotes its binding to the 30S ribosomal subunits. Also involved in the hydrolysis of GTP during the formation of the 70S ribosomal complex. The protein is Translation initiation factor IF-2 of Nocardia farcinica (strain IFM 10152).